Consider the following 190-residue polypeptide: Holliday junction branch migration complex subunit RuvA (190 aa).

Residues 1–64 form a domain I region; the sequence is MIGKLTGTLL…EDAQLLYGFG (64 aa). Residues 65–137 are domain II; the sequence is TAQERQAFRE…LKGKLGADVG (73 aa). Positions 137 to 141 are flexible linker; that stretch reads GVRAH. Residues 142-190 are domain III; that stretch reads AANDNQADILQALLALGYNDKEAAAALKALPADVGVSEGIKLALKSLSK.

This sequence belongs to the RuvA family. Homotetramer. Forms an RuvA(8)-RuvB(12)-Holliday junction (HJ) complex. HJ DNA is sandwiched between 2 RuvA tetramers; dsDNA enters through RuvA and exits via RuvB. An RuvB hexamer assembles on each DNA strand where it exits the tetramer. Each RuvB hexamer is contacted by two RuvA subunits (via domain III) on 2 adjacent RuvB subunits; this complex drives branch migration. In the full resolvosome a probable DNA-RuvA(4)-RuvB(12)-RuvC(2) complex forms which resolves the HJ.

The protein resides in the cytoplasm. Its function is as follows. The RuvA-RuvB-RuvC complex processes Holliday junction (HJ) DNA during genetic recombination and DNA repair, while the RuvA-RuvB complex plays an important role in the rescue of blocked DNA replication forks via replication fork reversal (RFR). RuvA specifically binds to HJ cruciform DNA, conferring on it an open structure. The RuvB hexamer acts as an ATP-dependent pump, pulling dsDNA into and through the RuvAB complex. HJ branch migration allows RuvC to scan DNA until it finds its consensus sequence, where it cleaves and resolves the cruciform DNA. This is Holliday junction branch migration complex subunit RuvA from Acidovorax sp. (strain JS42).